A 558-amino-acid chain; its full sequence is Protein OS-9 homolog (558 aa).

The signal sequence occupies residues 1–17; it reads MLLKSLALIASSSLAAT. Asn-68 carries an N-linked (GlcNAc...) asparagine glycan. The MRH domain occupies 111 to 237; sequence GDCLFYEQGF…QVGTPRLCKD (127 aa). Residues Cys-113 and Cys-126 are joined by a disulfide bond. Gln-133, Arg-197, Glu-219, and Tyr-225 together coordinate a mannooligosaccharide derivative. Cystine bridges form between Cys-190–Cys-223 and Cys-205–Cys-235. 2 disordered regions span residues 435–508 and 539–558; these read SKKL…DEDE and KDLADKEDDDDDYEDYGLSD. Positions 441 to 466 are enriched in basic and acidic residues; sequence KKEAASTKREEAKKQVEASVEEKAVD. Residues 474 to 492 are compositionally biased toward polar residues; it reads DTVTSTQTFFRTQTLSTAE. Positions 543-558 are enriched in acidic residues; the sequence is DKEDDDDDYEDYGLSD.

It belongs to the OS-9 family. Interacts with missfolded ER lumenal proteins.

It localises to the endoplasmic reticulum membrane. Lectin involved in the quality control of the secretory pathway. As a member of the endoplasmic reticulum-associated degradation lumenal (ERAD-L) surveillance system, targets misfolded endoplasmic reticulum lumenal glycoproteins for degradation. In Yarrowia lipolytica (strain CLIB 122 / E 150) (Yeast), this protein is Protein OS-9 homolog (YOS9).